Here is a 280-residue protein sequence, read N- to C-terminus: Dimethylglycine N-methyltransferase (280 aa).

Belongs to the methyltransferase superfamily. As to quaternary structure, monomer.

The catalysed reaction is N,N-dimethylglycine + S-adenosyl-L-methionine = glycine betaine + S-adenosyl-L-homocysteine + H(+). It participates in amine and polyamine biosynthesis; betaine biosynthesis via glycine pathway; betaine from glycine: step 3/3. In terms of biological role, catalyzes the methylation of dimethylglycine to betaine with S-adenosylmethionine (AdoMet) acting as the methyl donor. It has strict specificity for dimethylglycine as the methyl group acceptors. This is Dimethylglycine N-methyltransferase from Parasynechococcus marenigrum (strain WH8102).